Consider the following 446-residue polypeptide: tRNA modification GTPase MnmE (446 aa).

The (6S)-5-formyl-5,6,7,8-tetrahydrofolate site is built by R22, E80, and R119. One can recognise a TrmE-type G domain in the interval G215 to N370. Residue N225 participates in K(+) binding. GTP is bound by residues N225 to S230, S244 to T250, and D269 to G272. A Mg(2+)-binding site is contributed by S229. Positions 244, 246, and 249 each coordinate K(+). T250 is a Mg(2+) binding site. K446 is a binding site for (6S)-5-formyl-5,6,7,8-tetrahydrofolate.

Belongs to the TRAFAC class TrmE-Era-EngA-EngB-Septin-like GTPase superfamily. TrmE GTPase family. Homodimer. Heterotetramer of two MnmE and two MnmG subunits. K(+) serves as cofactor.

It is found in the cytoplasm. Functionally, exhibits a very high intrinsic GTPase hydrolysis rate. Involved in the addition of a carboxymethylaminomethyl (cmnm) group at the wobble position (U34) of certain tRNAs, forming tRNA-cmnm(5)s(2)U34. The sequence is that of tRNA modification GTPase MnmE from Sulfurimonas denitrificans (strain ATCC 33889 / DSM 1251) (Thiomicrospira denitrificans (strain ATCC 33889 / DSM 1251)).